Consider the following 400-residue polypeptide: Phosphoglycerate kinase (400 aa).

Residues 21-23, R36, 59-62, R118, and R151 each bind substrate; these read DFN and HLGR. ATP is bound by residues K201, G293, E324, and 353 to 356; that span reads GGDS.

Belongs to the phosphoglycerate kinase family. In terms of assembly, monomer.

The protein localises to the cytoplasm. It carries out the reaction (2R)-3-phosphoglycerate + ATP = (2R)-3-phospho-glyceroyl phosphate + ADP. It functions in the pathway carbohydrate degradation; glycolysis; pyruvate from D-glyceraldehyde 3-phosphate: step 2/5. This is Phosphoglycerate kinase from Fervidobacterium nodosum (strain ATCC 35602 / DSM 5306 / Rt17-B1).